Reading from the N-terminus, the 271-residue chain is Tryptophan synthase alpha chain (271 aa).

Active-site proton acceptor residues include glutamate 49 and aspartate 60.

It belongs to the TrpA family. In terms of assembly, tetramer of two alpha and two beta chains.

It carries out the reaction (1S,2R)-1-C-(indol-3-yl)glycerol 3-phosphate + L-serine = D-glyceraldehyde 3-phosphate + L-tryptophan + H2O. Its pathway is amino-acid biosynthesis; L-tryptophan biosynthesis; L-tryptophan from chorismate: step 5/5. Functionally, the alpha subunit is responsible for the aldol cleavage of indoleglycerol phosphate to indole and glyceraldehyde 3-phosphate. The polypeptide is Tryptophan synthase alpha chain (Burkholderia mallei (strain NCTC 10247)).